The primary structure comprises 385 residues: MSWQQRVDDALTARRATDTLRRRYVVSQGAGRWLVANGRQYLNFSSNDYLGLSQHPQIIRAWQQAATRFGVGSGGSGHISGYSVAHRALEEELAQWLGYPRALLFISGFAANQAVITALMKKNDRIVADRLSHASLLEAANLSPAQLRRFIHNDTQHLSRLLQSPCVGQQLVVTEGVYSMDGDSAPLAEIQHIARRHHAWLLVDDAHGIGVTGDEGRGTCWQRGVKPELLVVTFGKGFGVSGAAVLCSESVADYLLQFARHLVYSTSMPPAQAQALSASLAVIRSDEGRERREKLAALVQRFRAGVNASRFTLLNAHSAIQPLIVGDNSRALRLAEALRQQGCWATAIRPPTVPVGTARLRLTLTQAHEACDIDRLLEVLHGAGE.

A substrate-binding site is contributed by Arg21. A pyridoxal 5'-phosphate-binding site is contributed by 108–109 (GF). His133 lines the substrate pocket. Residues Ser179, His207, and Thr233 each contribute to the pyridoxal 5'-phosphate site. Lys236 bears the N6-(pyridoxal phosphate)lysine mark. Thr352 lines the substrate pocket.

It belongs to the class-II pyridoxal-phosphate-dependent aminotransferase family. BioF subfamily. In terms of assembly, homodimer. Pyridoxal 5'-phosphate serves as cofactor.

It carries out the reaction 6-carboxyhexanoyl-[ACP] + L-alanine + H(+) = (8S)-8-amino-7-oxononanoate + holo-[ACP] + CO2. It participates in cofactor biosynthesis; biotin biosynthesis. Catalyzes the decarboxylative condensation of pimeloyl-[acyl-carrier protein] and L-alanine to produce 8-amino-7-oxononanoate (AON), [acyl-carrier protein], and carbon dioxide. The chain is 8-amino-7-oxononanoate synthase from Salmonella choleraesuis (strain SC-B67).